The primary structure comprises 602 residues: Elongation factor 4 (602 aa).

The tr-type G domain occupies 5–187 (DHIRNFAIIA…QIIVSLPAPE (183 aa)). Residues 17–22 (DHGKST) and 134–137 (NKVD) contribute to the GTP site.

The protein belongs to the TRAFAC class translation factor GTPase superfamily. Classic translation factor GTPase family. LepA subfamily.

It localises to the cell inner membrane. The enzyme catalyses GTP + H2O = GDP + phosphate + H(+). Its function is as follows. Required for accurate and efficient protein synthesis under certain stress conditions. May act as a fidelity factor of the translation reaction, by catalyzing a one-codon backward translocation of tRNAs on improperly translocated ribosomes. Back-translocation proceeds from a post-translocation (POST) complex to a pre-translocation (PRE) complex, thus giving elongation factor G a second chance to translocate the tRNAs correctly. Binds to ribosomes in a GTP-dependent manner. In Pelagibacter ubique (strain HTCC1062), this protein is Elongation factor 4.